The sequence spans 412 residues: Tyrosine--tRNA ligase (412 aa).

The 'HIGH' region signature appears at 56–65 (PSAPDVHIGH). Positions 240 to 244 (KMSKS) match the 'KMSKS' region motif. Lysine 243 is an ATP binding site. The region spanning 351-412 (VWIVDLLVTL…GKRKFKKLVR (62 aa)) is the S4 RNA-binding domain.

It belongs to the class-I aminoacyl-tRNA synthetase family. TyrS type 2 subfamily. In terms of assembly, homodimer.

The protein localises to the cytoplasm. It catalyses the reaction tRNA(Tyr) + L-tyrosine + ATP = L-tyrosyl-tRNA(Tyr) + AMP + diphosphate + H(+). Catalyzes the attachment of tyrosine to tRNA(Tyr) in a two-step reaction: tyrosine is first activated by ATP to form Tyr-AMP and then transferred to the acceptor end of tRNA(Tyr). In Halalkalibacterium halodurans (strain ATCC BAA-125 / DSM 18197 / FERM 7344 / JCM 9153 / C-125) (Bacillus halodurans), this protein is Tyrosine--tRNA ligase.